Reading from the N-terminus, the 323-residue chain is MSKIPAPDEKTSRSDSGSSILRKPDWLRVRSPGGAAFNETHGLIRKLGLATVCEEAACPNIGECWTKKQATVMILGEVCTRACAFCNVKTGHPDKVNPLEPGHVADVAAEMNLEHIVITSVDRDDLEDGGASQFVKVIEAVRARTPKTTIEILTPDFRGKPDHALDMIVKARPDVFNHNLETVPRLYPTIRPGARYFTSLRLLEKVRERDPSIFTKSGLMLGLGEDRLEVHQVMDDMRQADVDFLTLGQYLQPTPRHVRVEEFVTPDSFKAYAATARAKGFSMVASSPLTRSSYYAGADFARLKEARQKKLEKIAAKNSGKGA.

7 residues coordinate [4Fe-4S] cluster: Cys53, Cys58, Cys64, Cys79, Cys83, Cys86, and Ser293. Residues 65-282 form the Radical SAM core domain; it reads WTKKQATVMI…AATARAKGFS (218 aa).

Belongs to the radical SAM superfamily. Lipoyl synthase family. [4Fe-4S] cluster serves as cofactor.

The protein localises to the cytoplasm. The enzyme catalyses [[Fe-S] cluster scaffold protein carrying a second [4Fe-4S](2+) cluster] + N(6)-octanoyl-L-lysyl-[protein] + 2 oxidized [2Fe-2S]-[ferredoxin] + 2 S-adenosyl-L-methionine + 4 H(+) = [[Fe-S] cluster scaffold protein] + N(6)-[(R)-dihydrolipoyl]-L-lysyl-[protein] + 4 Fe(3+) + 2 hydrogen sulfide + 2 5'-deoxyadenosine + 2 L-methionine + 2 reduced [2Fe-2S]-[ferredoxin]. The protein operates within protein modification; protein lipoylation via endogenous pathway; protein N(6)-(lipoyl)lysine from octanoyl-[acyl-carrier-protein]: step 2/2. Catalyzes the radical-mediated insertion of two sulfur atoms into the C-6 and C-8 positions of the octanoyl moiety bound to the lipoyl domains of lipoate-dependent enzymes, thereby converting the octanoylated domains into lipoylated derivatives. This chain is Lipoyl synthase, found in Zymomonas mobilis subsp. mobilis (strain ATCC 31821 / ZM4 / CP4).